The primary structure comprises 1748 residues: Tight junction protein 1 (1748 aa).

A PDZ 1 domain is found at T23–K110. The span at A102–V112 shows a compositional bias: basic residues. Positions A102–L189 are disordered. Positions P123 to I136 are enriched in acidic residues. S125 carries the phosphoserine modification. Y132 bears the Phosphotyrosine mark. A compositionally biased stretch (basic and acidic residues) spans R149–S175. S175, S178, and S179 each carry phosphoserine. Phosphothreonine is present on T185. In terms of domain architecture, PDZ 2 spans K186–E264. A phosphoserine mark is found at S212 and S241. A Phosphothreonine modification is found at T267. A phosphoserine mark is found at S275, S277, S280, S284, S290, S294, S297, S300, S323, S329, S334, S337, and S353. The disordered stretch occupies residues L295–D396. Basic and acidic residues predominate over residues H299–R327. Polar residues predominate over residues S329–L338. Position 354 is a phosphothreonine (T354). Positions K357–K377 are enriched in basic and acidic residues. The region spanning S421–K502 is the PDZ 3 domain. In terms of domain architecture, SH3 spans G516–A584. The 182-residue stretch at R598–N779 folds into the Guanylate kinase-like domain. Phosphoserine is present on residues S617 and S622. The occludin (OCLN)-binding region stretch occupies residues Y633 to R876. At T809 the chain carries Phosphothreonine. 2 positions are modified to phosphoserine: S810 and S821. Y822 carries the post-translational modification Phosphotyrosine. Phosphoserine is present on residues S824, S828, and S837. Disordered stretches follow at residues A825 to E1081 and D1095 to D1587. T846, T848, T854, T861, and T868 each carry phosphothreonine. Basic and acidic residues predominate over residues E879–N892. The segment covering Q893–P906 has biased composition (low complexity). S912 carries the post-translational modification Phosphoserine. 2 stretches are compositionally biased toward polar residues: residues P934 to N953 and P963 to T979. S968 carries the phosphoserine modification. Positions D998–R1014 are enriched in basic and acidic residues. Over residues Y1061–R1072 the composition is skewed to polar residues. A phosphoserine mark is found at S1071, S1111, and S1139. The segment covering H1110–E1125 has biased composition (basic and acidic residues). 2 positions are modified to phosphotyrosine: Y1140 and Y1165. Positions R1151–P1371 are actin-binding region (ABR). Composition is skewed to basic and acidic residues over residues K1269–N1286 and P1336–D1347. Phosphotyrosine is present on Y1354. S1366 is modified (phosphoserine). Over residues S1389–S1400 the composition is skewed to low complexity. The span at K1403–E1420 shows a compositional bias: basic and acidic residues. A Phosphoserine modification is found at S1413. Composition is skewed to polar residues over residues N1459 to V1470 and G1512 to P1522. Residues P1538–K1547 are compositionally biased toward basic and acidic residues. Residues S1545 and S1617 each carry the phosphoserine modification. Residues A1634 to F1748 form the ZU5 domain.

It belongs to the MAGUK family. Homodimer. Forms heterodimers TJP3. Forms a heterodimer (via PDZ2 domain) with TJP2/ZO2 (via PDZ2 domain). Interacts with OCLN, CALM, claudins, CGN/cingulin, CXADR, GJA12, GJD3 and UBN1. Interacts (via ZU5 domain) with CDC42BPB and MYZAP. Interacts (via PDZ domain) with GJA1. Interacts (via PDZ domains) with ANKRD2. Interacts with POPDC1 (via the C-terminus cytoplasmic tail). Interacts with HSPA4 and KIRREL1. Interacts with DLL1. Interacts with USP53 (via the C-terminal region). Interacts (via ABR region) with F-actin. Interacts with DNMBP (via C-terminal domain); required for the apical cell-cell junction localization of DNMBP. Interacts with SPEF1. Interacts (via N-terminus) with CTNNA1. Interacts with CLDN18. Interacts with CLDN16 (via TRV motif); this is a prerequisite for anchoring of CLDN16 at the tight junction. Interacts with PKP1; the interaction facilitates TJP1/ZO-1 localization to the plasma membrane. Interacts with PATJ (via PDZ1-6 domains); the interaction is required for attachment and extension of TJP1/ZO1 condensates along the apical cell interface. In terms of processing, phosphorylated at tyrosine redidues in response to epidermal growth factor (EGF). This response is dependent on an intact actin microfilament system. Dephosphorylated by PTPRJ. The alpha-containing isoform is found in most epithelial cell junctions. The short isoform is found both in endothelial cells and the highly specialized epithelial junctions of renal glomeruli and Sertoli cells of the seminiferous tubules.

The protein localises to the cell membrane. The protein resides in the cell junction. Its subcellular location is the tight junction. It localises to the gap junction. It is found in the cell projection. The protein localises to the podosome. Functionally, TJP1, TJP2, and TJP3 are closely related scaffolding proteins that link tight junction (TJ) transmembrane proteins such as claudins, junctional adhesion molecules, and occludin to the actin cytoskeleton. Forms a multistranded TJP1/ZO1 condensate which elongates to form a tight junction belt, the belt is anchored at the apical cell membrane via interaction with PATJ. The tight junction acts to limit movement of substances through the paracellular space and as a boundary between the compositionally distinct apical and basolateral plasma membrane domains of epithelial and endothelial cells. Necessary for lumenogenesis, and particularly efficient epithelial polarization and barrier formation. Plays a role in the regulation of cell migration by targeting CDC42BPB to the leading edge of migrating cells. Plays an important role in podosome formation and associated function, thus regulating cell adhesion and matrix remodeling. With TJP2 and TJP3, participates in the junctional retention and stability of the transcription factor DBPA, but is not involved in its shuttling to the nucleus. May play a role in mediating cell morphology changes during ameloblast differentiation via its role in tight junctions. The polypeptide is Tight junction protein 1 (Homo sapiens (Human)).